A 421-amino-acid chain; its full sequence is tRNA(Ile)-lysidine synthase (421 aa).

An ATP-binding site is contributed by 26–31 (SGGADS).

This sequence belongs to the tRNA(Ile)-lysidine synthase family.

Its subcellular location is the cytoplasm. The catalysed reaction is cytidine(34) in tRNA(Ile2) + L-lysine + ATP = lysidine(34) in tRNA(Ile2) + AMP + diphosphate + H(+). In terms of biological role, ligates lysine onto the cytidine present at position 34 of the AUA codon-specific tRNA(Ile) that contains the anticodon CAU, in an ATP-dependent manner. Cytidine is converted to lysidine, thus changing the amino acid specificity of the tRNA from methionine to isoleucine. The polypeptide is tRNA(Ile)-lysidine synthase (Streptococcus thermophilus (strain CNRZ 1066)).